A 586-amino-acid chain; its full sequence is Protein cereblon (586 aa).

Disordered regions lie at residues M1 to W114 and S158 to G194. The span at G14–A37 shows a compositional bias: basic and acidic residues. Positions M75–A85 are enriched in acidic residues. The span at S86–S96 shows a compositional bias: polar residues. Positions Q159 to E168 are enriched in basic and acidic residues. Residues T170–E179 are compositionally biased toward acidic residues. Over residues D180–P190 the composition is skewed to pro residues. Residues H226–S452 enclose the Lon N-terminal domain. The CULT domain maps to E451–K560. Residues C456, C459, C525, and C528 each coordinate Zn(2+).

It belongs to the CRBN family. Likely a component of a DCX (DDB1-CUL4-X-box) protein ligase complex. May interact with pic/DDB1. Ubiquitinated.

It is found in the nucleus. It functions in the pathway protein modification; protein ubiquitination. Its function is as follows. Substrate recognition component of a DCX (DDB1-CUL4-X-box) E3 protein ligase complex that mediates the ubiquitination and subsequent proteasomal degradation of target proteins. Has an essential role in mediating growth by negatively regulating insulin signaling. It also has a role in maintaining presynaptic function in the neuromuscular junction synapses of third-instar larvae. This Drosophila erecta (Fruit fly) protein is Protein cereblon.